A 255-amino-acid chain; its full sequence is Putative cysteine-rich repeat secretory protein 32 (255 aa).

Residues Met1–Ser28 form the signal peptide. Gnk2-homologous domains are found at residues Tyr35–Ser136 and Tyr143–Phe252.

The protein belongs to the cysteine-rich repeat secretory protein family.

It localises to the secreted. The chain is Putative cysteine-rich repeat secretory protein 32 (CRRSP32) from Arabidopsis thaliana (Mouse-ear cress).